The chain runs to 150 residues: uncharacterized protein (150 aa).

The next 4 helical transmembrane spans lie at 12–30, 40–62, 74–96, and 106–128; these read IVQR…YFLF, RLLS…LVLF, IRRT…VLSG, and ALID…SRAV.

It localises to the cell membrane. This is an uncharacterized protein from Archaeoglobus fulgidus (strain ATCC 49558 / DSM 4304 / JCM 9628 / NBRC 100126 / VC-16).